The primary structure comprises 59 residues: Large ribosomal subunit protein uL30 (59 aa).

It belongs to the universal ribosomal protein uL30 family. As to quaternary structure, part of the 50S ribosomal subunit.

This Escherichia coli (strain UTI89 / UPEC) protein is Large ribosomal subunit protein uL30.